Reading from the N-terminus, the 355-residue chain is Uroporphyrinogen decarboxylase (355 aa).

Substrate-binding positions include 27-31 (RQAGR), Asp77, Tyr154, Thr209, and His328.

This sequence belongs to the uroporphyrinogen decarboxylase family. In terms of assembly, homodimer.

Its subcellular location is the cytoplasm. The catalysed reaction is uroporphyrinogen III + 4 H(+) = coproporphyrinogen III + 4 CO2. It participates in porphyrin-containing compound metabolism; protoporphyrin-IX biosynthesis; coproporphyrinogen-III from 5-aminolevulinate: step 4/4. In terms of biological role, catalyzes the decarboxylation of four acetate groups of uroporphyrinogen-III to yield coproporphyrinogen-III. This Photobacterium profundum (strain SS9) protein is Uroporphyrinogen decarboxylase.